We begin with the raw amino-acid sequence, 177 residues long: Ribosome maturation factor RimP (177 aa).

Belongs to the RimP family.

The protein localises to the cytoplasm. Its function is as follows. Required for maturation of 30S ribosomal subunits. The chain is Ribosome maturation factor RimP from Mycobacterium marinum (strain ATCC BAA-535 / M).